We begin with the raw amino-acid sequence, 37 residues long: Large ribosomal subunit protein bL36 (37 aa).

Belongs to the bacterial ribosomal protein bL36 family.

The chain is Large ribosomal subunit protein bL36 from Bordetella bronchiseptica (strain ATCC BAA-588 / NCTC 13252 / RB50) (Alcaligenes bronchisepticus).